Reading from the N-terminus, the 399-residue chain is Elongation factor Tu (399 aa).

A tr-type G domain is found at 10 to 209 (KPHVNIGTIG…AVDEYIPTPE (200 aa)). The tract at residues 19–26 (GHVDHGKT) is G1. 19-26 (GHVDHGKT) serves as a coordination point for GTP. T26 contacts Mg(2+). A G2 region spans residues 60-64 (GITIA). Residues 81-84 (DCPG) are G3. Residues 81 to 85 (DCPGH) and 136 to 139 (NKED) each bind GTP. The interval 136-139 (NKED) is G4. The G5 stretch occupies residues 174–176 (SAL).

It belongs to the TRAFAC class translation factor GTPase superfamily. Classic translation factor GTPase family. EF-Tu/EF-1A subfamily. As to quaternary structure, monomer.

It localises to the cytoplasm. The catalysed reaction is GTP + H2O = GDP + phosphate + H(+). GTP hydrolase that promotes the GTP-dependent binding of aminoacyl-tRNA to the A-site of ribosomes during protein biosynthesis. This chain is Elongation factor Tu, found in Nitratiruptor sp. (strain SB155-2).